The following is a 379-amino-acid chain: Mannitol-1-phosphate 5-dehydrogenase (379 aa).

3 to 14 contributes to the NAD(+) binding site; that stretch reads ALHFGAGNIGRG.

The protein belongs to the mannitol dehydrogenase family.

It carries out the reaction D-mannitol 1-phosphate + NAD(+) = beta-D-fructose 6-phosphate + NADH + H(+). This chain is Mannitol-1-phosphate 5-dehydrogenase, found in Bacillus licheniformis (strain ATCC 14580 / DSM 13 / JCM 2505 / CCUG 7422 / NBRC 12200 / NCIMB 9375 / NCTC 10341 / NRRL NRS-1264 / Gibson 46).